A 95-amino-acid polypeptide reads, in one-letter code: DNA-directed RNA polymerase subunit omega (95 aa).

Belongs to the RNA polymerase subunit omega family. The RNAP catalytic core consists of 2 alpha, 1 beta, 1 beta' and 1 omega subunit. When a sigma factor is associated with the core the holoenzyme is formed, which can initiate transcription.

The enzyme catalyses RNA(n) + a ribonucleoside 5'-triphosphate = RNA(n+1) + diphosphate. Promotes RNA polymerase assembly. Latches the N- and C-terminal regions of the beta' subunit thereby facilitating its interaction with the beta and alpha subunits. The protein is DNA-directed RNA polymerase subunit omega of Colwellia psychrerythraea (strain 34H / ATCC BAA-681) (Vibrio psychroerythus).